A 110-amino-acid polypeptide reads, in one-letter code: UPF0213 protein DP2720 (110 aa).

The GIY-YIG domain occupies 12–88; the sequence is PAWFVYIVQC…KQLSPTRKRT (77 aa).

Belongs to the UPF0213 family.

The polypeptide is UPF0213 protein DP2720 (Desulfotalea psychrophila (strain LSv54 / DSM 12343)).